Here is a 293-residue protein sequence, read N- to C-terminus: MATNQSISIFSSASLAVEYVDSLLPENPLQEPFKNAWNYMLNNYTKFQIATWGSLIVHEALYFFFCLPGFLFQFIPYMKKYKIQKDKPETWENQWKCFKVLLFNHFCIQFPLICGTYYFTEYFSIPYDWETMPRWYIALARCFGCAVIEDTWHYFLHRLLHHKRIYKYIHKIHHEFQAPFGMEAEYAHPLETLILGTGFFIGIMLLCDHVILLWAWVTVRLIETIDVHSGYDIPLNPLHLIPFYAGSRHHDFHHMNFIGNYASTFTWWDRIFGTDAQYNAYNEKRKKAEKKTE.

The next 2 membrane-spanning stretches (helical) occupy residues 55–75 (LIVH…FQFI) and 100–120 (VLLF…YYFT). One can recognise a Fatty acid hydroxylase domain in the interval 145–274 (CAVIEDTWHY…FTWWDRIFGT (130 aa)). Residues 157-161 (HRLLH) carry the Histidine box-1 motif. The short motif at 170–174 (HKIHH) is the Histidine box-2 element. A helical transmembrane segment spans residues 199-219 (FFIGIMLLCDHVILLWAWVTV). The Histidine box-3 signature appears at 249–255 (HHDFHHM).

The protein belongs to the sterol desaturase family. Requires Fe cation as cofactor. In terms of processing, ubiquitinated by MARCHF6, leading to proteasomal degradation.

Its subcellular location is the endoplasmic reticulum membrane. The enzyme catalyses 4,4-dimethyl-5alpha-cholest-7-en-3beta-ol + 6 Fe(II)-[cytochrome b5] + 3 O2 + 5 H(+) = 4alpha-carboxy-4beta-methyl-5alpha-cholest-7-ene-3beta-ol + 6 Fe(III)-[cytochrome b5] + 4 H2O. It catalyses the reaction 4,4-dimethyl-5alpha-cholesta-8,24-dien-3beta-ol + 6 Fe(II)-[cytochrome b5] + 3 O2 + 5 H(+) = 4beta-methylzymosterol-4alpha-carboxylate + 6 Fe(III)-[cytochrome b5] + 4 H2O. The catalysed reaction is 4alpha-methylzymosterol + 6 Fe(II)-[cytochrome b5] + 3 O2 + 5 H(+) = 4alpha-carboxyzymosterol + 6 Fe(III)-[cytochrome b5] + 4 H2O. It carries out the reaction 4alpha-methyl-5alpha-cholest-7-en-3beta-ol + 6 Fe(II)-[cytochrome b5] + 3 O2 + 5 H(+) = 4alpha-carboxy-5alpha-cholest-7-en-3beta-ol + 6 Fe(III)-[cytochrome b5] + 4 H2O. The enzyme catalyses 4,4-dimethyl-5alpha-cholest-8-en-3beta-ol + 6 Fe(II)-[cytochrome b5] + 3 O2 + 5 H(+) = 4alpha-carboxy-4beta-methyl-5alpha-cholest-8-en-3beta-ol + 6 Fe(III)-[cytochrome b5] + 4 H2O. It catalyses the reaction 4alpha-methyl-5alpha-cholest-8-en-3beta-ol + 6 Fe(II)-[cytochrome b5] + 3 O2 + 5 H(+) = 4alpha-carboxy-5alpha-cholest-8-ene-3beta-ol + 6 Fe(III)-[cytochrome b5] + 4 H2O. It functions in the pathway steroid biosynthesis; zymosterol biosynthesis; zymosterol from lanosterol: step 3/6. The protein operates within steroid biosynthesis; cholesterol biosynthesis. Catalyzes the three-step monooxygenation required for the demethylation of 4,4-dimethyl and 4alpha-methylsterols, which can be subsequently metabolized to cholesterol. This Sus scrofa (Pig) protein is Methylsterol monooxygenase 1 (MSMO1).